A 297-amino-acid polypeptide reads, in one-letter code: Homoserine kinase (297 aa).

An ATP-binding site is contributed by 82–92 (PVSRGLGSSAA).

It belongs to the GHMP kinase family. Homoserine kinase subfamily.

It is found in the cytoplasm. It carries out the reaction L-homoserine + ATP = O-phospho-L-homoserine + ADP + H(+). The protein operates within amino-acid biosynthesis; L-threonine biosynthesis; L-threonine from L-aspartate: step 4/5. Its function is as follows. Catalyzes the ATP-dependent phosphorylation of L-homoserine to L-homoserine phosphate. The chain is Homoserine kinase from Clostridium botulinum (strain ATCC 19397 / Type A).